A 139-amino-acid chain; its full sequence is Mannose-specific lectin (139 aa).

A Bulb-type lectin domain is found at 1 to 109 (DNILYSGETL…ARWATGTNIH (109 aa)). 22 residues coordinate alpha-D-mannopyranose: glutamine 26, aspartate 28, asparagine 30, tyrosine 34, aspartate 37, lysine 38, tryptophan 41, alanine 42, asparagine 44, glutamine 57, aspartate 59, asparagine 61, tyrosine 65, isoleucine 72, tryptophan 73, asparagine 76, asparagine 83, glutamine 89, aspartate 91, asparagine 93, tyrosine 97, and tryptophan 102. Cysteine 29 and cysteine 52 are joined by a disulfide.

Homotetramer; antiparallel. As to expression, detected in bulbs (at protein level).

Its subcellular location is the secreted. Mannose-specific lectin. Displays antiviral activity and therefore may contribute to defense against infections. Shows agglutinating activity towards rabbit erythrocytes. This chain is Mannose-specific lectin, found in Narcissus tazetta (Cream narcissus).